We begin with the raw amino-acid sequence, 611 residues long: Protein ral2 (611 aa).

3 Kelch repeats span residues 43–91 (EAFV…HSGD), 96–149 (KLIF…EVNG), and 175–224 (YLII…VINK). Phosphoserine is present on Ser604.

Its function is as follows. Essential for mating and for recognition of the mating pheromone, and for the determination of cell shape. Implicated in activation of the ras1 protein. The protein is Protein ral2 (ral2) of Schizosaccharomyces pombe (strain 972 / ATCC 24843) (Fission yeast).